The chain runs to 254 residues: Probable phosphoglycerate mutase 4 (254 aa).

Substrate is bound by residues 10–17 and 23–24; these read RHGESTWN and SC. Catalysis depends on His11, which acts as the Tele-phosphohistidine intermediate. 2 positions are modified to phosphoserine: Ser14 and Ser23. Tyr26 carries the phosphotyrosine modification. Position 31 is a phosphoserine (Ser31). Substrate-binding positions include Arg62, 89–92, and Lys100; that span reads ERHY. Glu89 serves as the catalytic Proton donor/acceptor. Lys106 is modified (N6-acetyllysine). A substrate-binding site is contributed by 116–117; sequence RR. At Ser118 the chain carries Phosphoserine. Position 187-188 (187-188) interacts with substrate; it reads GN. The residue at position 251 (Lys251) is an N6-acetyllysine; alternate. Residue Lys251 is modified to N6-succinyllysine; alternate. N6-acetyllysine is present on residues Lys253 and Lys254.

Belongs to the phosphoglycerate mutase family. BPG-dependent PGAM subfamily.

The catalysed reaction is (2R)-2-phosphoglycerate = (2R)-3-phosphoglycerate. It catalyses the reaction (2R)-3-phospho-glyceroyl phosphate = (2R)-2,3-bisphosphoglycerate + H(+). This is Probable phosphoglycerate mutase 4 (PGAM4) from Pan troglodytes (Chimpanzee).